The following is a 159-amino-acid chain: Eukaryotic translation initiation factor 5A-3 (159 aa).

Residues 1 to 12 (MSDEEHQFESKA) show a composition bias toward basic and acidic residues. The segment at 1 to 21 (MSDEEHQFESKADAGASKTYP) is disordered. Residue Lys-52 is modified to Hypusine.

The protein belongs to the eIF-5A family. Lys-52 undergoes hypusination, a unique post-translational modification that consists in the addition of a butylamino group from spermidine to lysine side chain, leading to the formation of the unusual amino acid hypusine. eIF-5As are the only known proteins to undergo this modification, which is essential for their function.

In terms of biological role, translation factor that promotes translation elongation and termination, particularly upon ribosome stalling at specific amino acid sequence contexts. Binds between the exit (E) and peptidyl (P) site of the ribosome and promotes rescue of stalled ribosome: specifically required for efficient translation of polyproline-containing peptides as well as other motifs that stall the ribosome. Acts as a ribosome quality control (RQC) cofactor by joining the RQC complex to facilitate peptidyl transfer during CAT tailing step. The polypeptide is Eukaryotic translation initiation factor 5A-3 (Solanum lycopersicum (Tomato)).